The following is a 68-amino-acid chain: UPF0434 protein BTH_I0741 (68 aa).

The protein belongs to the UPF0434 family.

The polypeptide is UPF0434 protein BTH_I0741 (Burkholderia thailandensis (strain ATCC 700388 / DSM 13276 / CCUG 48851 / CIP 106301 / E264)).